The sequence spans 497 residues: Cobyrinate a,c-diamide synthase (497 aa).

Residues 273 to 478 (RIGIALDEAF…AHLHGVAYRE (206 aa)) form the GATase cobBQ-type domain. C355 (nucleophile) is an active-site residue.

This sequence belongs to the CobB/CbiA family. Mg(2+) serves as cofactor.

The catalysed reaction is cob(II)yrinate + 2 L-glutamine + 2 ATP + 2 H2O = cob(II)yrinate a,c diamide + 2 L-glutamate + 2 ADP + 2 phosphate + 2 H(+). The enzyme catalyses Ni-sirohydrochlorin + 2 L-glutamine + 2 ATP + 2 H2O = Ni-sirohydrochlorin a,c-diamide + 2 L-glutamate + 2 ADP + 2 phosphate + 2 H(+). It participates in cofactor biosynthesis; adenosylcobalamin biosynthesis; cob(II)yrinate a,c-diamide from sirohydrochlorin (anaerobic route): step 10/10. In terms of biological role, catalyzes the ATP-dependent amidation of the two carboxylate groups at positions a and c of cobyrinate, using either L-glutamine or ammonia as the nitrogen source (Potential). Involved in the biosynthesis of the unique nickel-containing tetrapyrrole coenzyme F430, the prosthetic group of methyl-coenzyme M reductase (MCR), which plays a key role in methanogenesis and anaerobic methane oxidation. Catalyzes the ATP-dependent amidation of the two carboxylate groups at positions a and c of Ni-sirohydrochlorin, using L-glutamine or ammonia as the nitrogen source. The protein is Cobyrinate a,c-diamide synthase of Methanosarcina acetivorans (strain ATCC 35395 / DSM 2834 / JCM 12185 / C2A).